A 216-amino-acid chain; its full sequence is 3-isopropylmalate dehydratase small subunit (216 aa).

It belongs to the LeuD family. LeuD type 1 subfamily. As to quaternary structure, heterodimer of LeuC and LeuD.

The catalysed reaction is (2R,3S)-3-isopropylmalate = (2S)-2-isopropylmalate. Its pathway is amino-acid biosynthesis; L-leucine biosynthesis; L-leucine from 3-methyl-2-oxobutanoate: step 2/4. In terms of biological role, catalyzes the isomerization between 2-isopropylmalate and 3-isopropylmalate, via the formation of 2-isopropylmaleate. The protein is 3-isopropylmalate dehydratase small subunit of Bordetella avium (strain 197N).